The following is a 258-amino-acid chain: Cytochrome c oxidase subunit 2 (258 aa).

The Mitochondrial intermembrane portion of the chain corresponds to 1-41 (MIVNECLFFTIALCDAAEPWQLGFQDAATPMMQGIIDLHHD). A helical transmembrane segment spans residues 42–58 (ILFFLILILVFVLWILV). Residues 59–82 (RALWHFYYKKNPIPQRIVHGTTIE) are Mitochondrial matrix-facing. Residues 83 to 104 (ILWTIFPSIILMFIAIPSFALL) form a helical membrane-spanning segment. Topologically, residues 105–258 (YSMDEVVVDP…VSNLFIPPTS (154 aa)) are mitochondrial intermembrane. Cu cation contacts are provided by H187, C222, E224, C226, H230, and M233. Residue E224 participates in Mg(2+) binding.

This sequence belongs to the cytochrome c oxidase subunit 2 family. In terms of assembly, component of the cytochrome c oxidase (complex IV, CIV), a multisubunit enzyme composed of a catalytic core of 3 subunits and several supernumerary subunits. The complex exists as a monomer or a dimer and forms supercomplexes (SCs) in the inner mitochondrial membrane with ubiquinol-cytochrome c oxidoreductase (cytochrome b-c1 complex, complex III, CIII). Cu cation serves as cofactor.

It is found in the mitochondrion inner membrane. It carries out the reaction 4 Fe(II)-[cytochrome c] + O2 + 8 H(+)(in) = 4 Fe(III)-[cytochrome c] + 2 H2O + 4 H(+)(out). Functionally, component of the cytochrome c oxidase, the last enzyme in the mitochondrial electron transport chain which drives oxidative phosphorylation. The respiratory chain contains 3 multisubunit complexes succinate dehydrogenase (complex II, CII), ubiquinol-cytochrome c oxidoreductase (cytochrome b-c1 complex, complex III, CIII) and cytochrome c oxidase (complex IV, CIV), that cooperate to transfer electrons derived from NADH and succinate to molecular oxygen, creating an electrochemical gradient over the inner membrane that drives transmembrane transport and the ATP synthase. Cytochrome c oxidase is the component of the respiratory chain that catalyzes the reduction of oxygen to water. Electrons originating from reduced cytochrome c in the intermembrane space (IMS) are transferred via the dinuclear copper A center (CU(A)) of subunit 2 and heme A of subunit 1 to the active site in subunit 1, a binuclear center (BNC) formed by heme A3 and copper B (CU(B)). The BNC reduces molecular oxygen to 2 water molecules using 4 electrons from cytochrome c in the IMS and 4 protons from the mitochondrial matrix. The protein is Cytochrome c oxidase subunit 2 (COX2) of Oenothera berteroana (Bertero's evening primrose).